Reading from the N-terminus, the 286-residue chain is ATP synthase gamma chain (286 aa).

Belongs to the ATPase gamma chain family. F-type ATPases have 2 components, CF(1) - the catalytic core - and CF(0) - the membrane proton channel. CF(1) has five subunits: alpha(3), beta(3), gamma(1), delta(1), epsilon(1). CF(0) has three main subunits: a, b and c.

The protein resides in the cell inner membrane. In terms of biological role, produces ATP from ADP in the presence of a proton gradient across the membrane. The gamma chain is believed to be important in regulating ATPase activity and the flow of protons through the CF(0) complex. The chain is ATP synthase gamma chain from Pseudomonas aeruginosa (strain UCBPP-PA14).